The primary structure comprises 589 residues: Aspartate--tRNA ligase (589 aa).

E176 is an L-aspartate binding site. An aspartate region spans residues 200 to 203 (QLFK). L-aspartate is bound at residue R222. Residues 222–224 (RDE) and Q231 contribute to the ATP site. H449 provides a ligand contact to L-aspartate. ATP is bound at residue E483. R490 lines the L-aspartate pocket. 535-538 (GLDR) provides a ligand contact to ATP.

Belongs to the class-II aminoacyl-tRNA synthetase family. Type 1 subfamily. Homodimer.

It is found in the cytoplasm. It carries out the reaction tRNA(Asp) + L-aspartate + ATP = L-aspartyl-tRNA(Asp) + AMP + diphosphate. Functionally, catalyzes the attachment of L-aspartate to tRNA(Asp) in a two-step reaction: L-aspartate is first activated by ATP to form Asp-AMP and then transferred to the acceptor end of tRNA(Asp). The polypeptide is Aspartate--tRNA ligase (Enterococcus faecalis (strain ATCC 700802 / V583)).